Reading from the N-terminus, the 733-residue chain is Polyribonucleotide nucleotidyltransferase (733 aa).

Positions 488 and 494 each coordinate Mg(2+). The KH domain maps to 555–614 (PRIEMMTIPVEKIREVIGSGGKVIREIVEQTGAKINIEDDGTIKIASPDTKSIETAKSWI). Positions 624-692 (GTIYQGTVVK…ERGKIRLSMK (69 aa)) constitute an S1 motif domain. The segment at 698-733 (TGKEIPQDDLIKTEKEQNPDEKNKSEKKRHNRKKED) is disordered. Basic and acidic residues predominate over residues 702-721 (IPQDDLIKTEKEQNPDEKNK). Positions 722–733 (SEKKRHNRKKED) are enriched in basic residues.

Belongs to the polyribonucleotide nucleotidyltransferase family. Mg(2+) serves as cofactor.

Its subcellular location is the cytoplasm. The enzyme catalyses RNA(n+1) + phosphate = RNA(n) + a ribonucleoside 5'-diphosphate. Involved in mRNA degradation. Catalyzes the phosphorolysis of single-stranded polyribonucleotides processively in the 3'- to 5'-direction. The chain is Polyribonucleotide nucleotidyltransferase from Bartonella bacilliformis (strain ATCC 35685 / KC583 / Herrer 020/F12,63).